The following is a 132-amino-acid chain: Small ribosomal subunit protein uS8 (132 aa).

This sequence belongs to the universal ribosomal protein uS8 family. As to quaternary structure, part of the 30S ribosomal subunit. Contacts proteins S5 and S12.

One of the primary rRNA binding proteins, it binds directly to 16S rRNA central domain where it helps coordinate assembly of the platform of the 30S subunit. The protein is Small ribosomal subunit protein uS8 of Bartonella tribocorum (strain CIP 105476 / IBS 506).